The following is a 268-amino-acid chain: Zinc import ATP-binding protein ZnuC (268 aa).

In terms of domain architecture, ABC transporter spans 16–231; it reads IQLKNINVVF…PTFMRLWGNQ (216 aa). ATP is bound at residue 48–55; sequence GPNGGGKS.

It belongs to the ABC transporter superfamily. Zinc importer (TC 3.A.1.15.5) family. As to quaternary structure, the complex is composed of two ATP-binding proteins (ZnuC), two transmembrane proteins (ZnuB) and a solute-binding protein (ZnuA).

The protein resides in the cell inner membrane. The catalysed reaction is Zn(2+)(out) + ATP(in) + H2O(in) = Zn(2+)(in) + ADP(in) + phosphate(in) + H(+)(in). In terms of biological role, part of the ABC transporter complex ZnuABC involved in zinc import. Responsible for energy coupling to the transport system. This chain is Zinc import ATP-binding protein ZnuC, found in Haemophilus influenzae (strain ATCC 51907 / DSM 11121 / KW20 / Rd).